A 130-amino-acid chain; its full sequence is RutC family protein HI_0719 (130 aa).

C109 is an active-site residue.

This sequence belongs to the RutC family. As to quaternary structure, homotrimer.

In Haemophilus influenzae (strain ATCC 51907 / DSM 11121 / KW20 / Rd), this protein is RutC family protein HI_0719.